The sequence spans 445 residues: Endoplasmic reticulum membrane adapter protein XK (445 aa).

Topologically, residues 1 to 2 (MK) are cytoplasmic. The chain crosses the membrane as a helical span at residues 3–23 (FPASVLASVFLFVAETMAALY). Topologically, residues 24–37 (LSSTYRSAGDRMWQ) are extracellular. A helical membrane pass occupies residues 38-58 (ALTLFFSLMPCTLVQLTLLFV). At 59-68 (HRDLSRDRPL) the chain is on the cytoplasmic side. The chain crosses the membrane as a helical span at residues 69 to 89 (VLLMHLLQLGPLYRCCEVFCI). Over 90-140 (YCQSDQNEEPYVSITKKRQMPKDGLSEEVEKEVGQSEGKLFTHRSAFSRAS) the chain is Extracellular. Ser115 bears the Phosphoserine mark. The chain crosses the membrane as a helical span at residues 141 to 161 (VIQAFLGSAPQLTLQLYITVL). Residues 162-170 (EQNITTGRF) are Cytoplasmic-facing. A helical membrane pass occupies residues 171 to 191 (IMVLSLLSIVYGALRCNILAI). The Extracellular portion of the chain corresponds to 192 to 207 (KIKYDEYEVKVKPLAY). A helical membrane pass occupies residues 208–228 (VCIFLWRSFEIATRVIVLVLF). Residues 229-234 (TSVLKI) lie on the Cytoplasmic side of the membrane. The helical transmembrane segment at 235-255 (WVVVVILVNFFSFFLYPWILF) threads the bilayer. Topologically, residues 256–276 (WNSGSPFPENIEKALTRVGTT) are extracellular. Residues 277 to 297 (IVLGFLTLLYAGINMFCWSAV) traverse the membrane as a helical segment. The Cytoplasmic portion of the chain corresponds to 298–316 (QLKIDNPELISKSQNWYRL). A helical transmembrane segment spans residues 317-337 (LIYYMMRFVENSVLLLLWFFF). Residues 338–348 (KTDIYMYVCAP) lie on the Extracellular side of the membrane. Residues 349–369 (LLILQLLIGYCTSILFMLVFY) form a helical membrane-spanning segment. At 370 to 445 (QFFHPCKKLF…IWTAVDLCST (76 aa)) the chain is on the cytoplasmic side.

Belongs to the XK family. In terms of assembly, heterodimer with Kell; disulfide-linked. Interacts with VPS13A.

It is found in the endoplasmic reticulum membrane. Recruits the lipid transfer protein VPS13A from lipid droplets to the endoplasmic reticulum (ER) membrane. The polypeptide is Endoplasmic reticulum membrane adapter protein XK (Rattus norvegicus (Rat)).